A 141-amino-acid polypeptide reads, in one-letter code: Putative ankyrin repeat protein FPV223 (141 aa).

4 ANK repeats span residues 21-50, 54-83, 85-114, and 118-140; these read SGRT…DVFK, CMCT…YIVK, RNKL…NENS, and DGLT…MFVI.

The chain is Putative ankyrin repeat protein FPV223 from Vertebrata (FPV).